The following is a 238-amino-acid chain: Segregation and condensation protein A (238 aa).

It belongs to the ScpA family. In terms of assembly, component of a cohesin-like complex composed of ScpA, ScpB and the Smc homodimer, in which ScpA and ScpB bind to the head domain of Smc. The presence of the three proteins is required for the association of the complex with DNA.

It is found in the cytoplasm. Participates in chromosomal partition during cell division. May act via the formation of a condensin-like complex containing Smc and ScpB that pull DNA away from mid-cell into both cell halves. This is Segregation and condensation protein A from Macrococcus caseolyticus (strain JCSC5402) (Macrococcoides caseolyticum).